We begin with the raw amino-acid sequence, 169 residues long: Der GTPase-activating protein YihI (169 aa).

Disordered stretches follow at residues 1–83 (MNPL…PTKP) and 150–169 (DEEEREEEKQDDIMQLLKGN). Residues 21–30 (NREELNAEGR) show a composition bias toward basic and acidic residues. Over residues 31 to 40 (ARKREKKHRG) the composition is skewed to basic residues. 2 stretches are compositionally biased toward basic and acidic residues: residues 51 to 66 (SGDKHPSGKQQRDPRL) and 150 to 161 (DEEEREEEKQDD).

Belongs to the YihI family. As to quaternary structure, interacts with Der.

Functionally, a GTPase-activating protein (GAP) that modifies Der/EngA GTPase function. May play a role in ribosome biogenesis. The polypeptide is Der GTPase-activating protein YihI (Photorhabdus laumondii subsp. laumondii (strain DSM 15139 / CIP 105565 / TT01) (Photorhabdus luminescens subsp. laumondii)).